The primary structure comprises 430 residues: Histidine--tRNA ligase (430 aa).

It belongs to the class-II aminoacyl-tRNA synthetase family. Homodimer.

The protein localises to the cytoplasm. The enzyme catalyses tRNA(His) + L-histidine + ATP = L-histidyl-tRNA(His) + AMP + diphosphate + H(+). This is Histidine--tRNA ligase from Acinetobacter baumannii (strain AB307-0294).